The sequence spans 147 residues: 3-dehydroquinate dehydratase (147 aa).

Tyrosine 24 acts as the Proton acceptor in catalysis. Asparagine 75, histidine 81, and aspartate 88 together coordinate substrate. Residue histidine 101 is the Proton donor of the active site. Substrate is bound by residues 102 to 103 (LS) and arginine 112.

Belongs to the type-II 3-dehydroquinase family. Homododecamer.

The enzyme catalyses 3-dehydroquinate = 3-dehydroshikimate + H2O. The protein operates within metabolic intermediate biosynthesis; chorismate biosynthesis; chorismate from D-erythrose 4-phosphate and phosphoenolpyruvate: step 3/7. Catalyzes a trans-dehydration via an enolate intermediate. The sequence is that of 3-dehydroquinate dehydratase from Caulobacter sp. (strain K31).